The following is a 291-amino-acid chain: D-alanine--D-alanine ligase (291 aa).

The region spanning K99–T291 is the ATP-grasp domain. E125–T179 lines the ATP pocket. Residues D245, E258, and N260 each contribute to the Mg(2+) site.

This sequence belongs to the D-alanine--D-alanine ligase family. The cofactor is Mg(2+). Mn(2+) is required as a cofactor.

Its subcellular location is the cytoplasm. The catalysed reaction is 2 D-alanine + ATP = D-alanyl-D-alanine + ADP + phosphate + H(+). The protein operates within cell wall biogenesis; peptidoglycan biosynthesis. Its function is as follows. Cell wall formation. The sequence is that of D-alanine--D-alanine ligase from Aquifex aeolicus (strain VF5).